A 232-amino-acid chain; its full sequence is Sugar fermentation stimulation protein homolog (232 aa).

The protein belongs to the SfsA family.

This is Sugar fermentation stimulation protein homolog from Geobacter metallireducens (strain ATCC 53774 / DSM 7210 / GS-15).